Here is a 277-residue protein sequence, read N- to C-terminus: (-)-trans-carveol dehydrogenase (277 aa).

10 to 32 serves as a coordination point for NAD(+); sequence LITGAARGQGRSHAIKLAEEGAD. Serine 156 lines the substrate pocket. The active-site Proton acceptor is the tyrosine 169.

The protein belongs to the short-chain dehydrogenases/reductases (SDR) family. As to quaternary structure, homotetramer.

It carries out the reaction (1S,5R)-carveol + NAD(+) = (R)-carvone + NADH + H(+). It catalyses the reaction (1S,5S)-carveol + NAD(+) = (S)-carvone + NADH + H(+). The protein operates within terpene metabolism; limonene degradation. With respect to regulation, competitively inhibited by the product (S)- or (R)-carvone. Its function is as follows. Catalyzes the oxidation of carveol to carvone, with a strong stereoselectivity since it efficiently converts only the (6S)-stereoisomers, of which (-)-(4R,6S)-trans-carveol is the better substrate. Displays a broad substrate specificity with a preference for substituted cyclohexanols, and does not catalyze the oxidation of primary or short chain aliphatic secondary alcohols. Is also able, albeit more slowly, to oxidize limonene-1,2-diol into 1-hydroxy-2-oxolimonene. The polypeptide is (-)-trans-carveol dehydrogenase (limC) (Rhodococcus erythropolis (Arthrobacter picolinophilus)).